The chain runs to 343 residues: D-alanine--D-alanine ligase (343 aa).

The 207-residue stretch at 129 to 335 (KYVLEHFNIK…YSKLIDELIE (207 aa)) folds into the ATP-grasp domain. 162–217 (ENKLGYAVFIKPSNSGSSVGITKAHNRKELEAGLEEAMKYDRKILVEEALNAREIE) lines the ATP pocket. Residues Asp-288, Glu-302, and Asn-304 each coordinate Mg(2+).

Belongs to the D-alanine--D-alanine ligase family. Mg(2+) is required as a cofactor. Mn(2+) serves as cofactor.

Its subcellular location is the cytoplasm. The enzyme catalyses 2 D-alanine + ATP = D-alanyl-D-alanine + ADP + phosphate + H(+). The protein operates within cell wall biogenesis; peptidoglycan biosynthesis. In terms of biological role, cell wall formation. The polypeptide is D-alanine--D-alanine ligase (Clostridium acetobutylicum (strain ATCC 824 / DSM 792 / JCM 1419 / IAM 19013 / LMG 5710 / NBRC 13948 / NRRL B-527 / VKM B-1787 / 2291 / W)).